A 193-amino-acid polypeptide reads, in one-letter code: 7-methyl-GTP pyrophosphatase (193 aa).

Aspartate 69 functions as the Proton acceptor in the catalytic mechanism.

The protein belongs to the Maf family. YceF subfamily. It depends on a divalent metal cation as a cofactor.

It is found in the cytoplasm. It carries out the reaction N(7)-methyl-GTP + H2O = N(7)-methyl-GMP + diphosphate + H(+). Functionally, nucleoside triphosphate pyrophosphatase that hydrolyzes 7-methyl-GTP (m(7)GTP). May have a dual role in cell division arrest and in preventing the incorporation of modified nucleotides into cellular nucleic acids. This Chromohalobacter salexigens (strain ATCC BAA-138 / DSM 3043 / CIP 106854 / NCIMB 13768 / 1H11) protein is 7-methyl-GTP pyrophosphatase.